Consider the following 421-residue polypeptide: ATP phosphoribosyltransferase regulatory subunit (421 aa).

Belongs to the class-II aminoacyl-tRNA synthetase family. HisZ subfamily. Heteromultimer composed of HisG and HisZ subunits.

The protein resides in the cytoplasm. Its pathway is amino-acid biosynthesis; L-histidine biosynthesis; L-histidine from 5-phospho-alpha-D-ribose 1-diphosphate: step 1/9. Required for the first step of histidine biosynthesis. May allow the feedback regulation of ATP phosphoribosyltransferase activity by histidine. The sequence is that of ATP phosphoribosyltransferase regulatory subunit from Clostridium novyi (strain NT).